The chain runs to 129 residues: Putative protein p14 (129 aa).

The protein is Putative protein p14 (14) of Acyrthosiphon pisum secondary endosymbiont phage 1 (Bacteriophage APSE-1).